Here is a 489-residue protein sequence, read N- to C-terminus: Mitochondrial-processing peptidase subunit beta (489 aa).

The N-terminal 43 residues, 1–43 (MAAAAARVVLSSAARRRLWGFSESLLIRGAAGRSLYFGENRLR), are a transit peptide targeting the mitochondrion. His101 contacts Zn(2+). Glu104 acts as the Proton acceptor in catalysis. His105 and Glu181 together coordinate Zn(2+).

This sequence belongs to the peptidase M16 family. Heterodimer of PMPCA (alpha) and PMPCB (beta) subunits, forming the mitochondrial processing protease (MPP) in which PMPCA is involved in substrate recognition and binding and PMPCB is the catalytic subunit. Zn(2+) serves as cofactor.

It is found in the mitochondrion matrix. It catalyses the reaction Release of N-terminal transit peptides from precursor proteins imported into the mitochondrion, typically with Arg in position P2.. Binding to PMPCA is required for catalytic activity. Functionally, catalytic subunit of the essential mitochondrial processing protease (MPP), which cleaves the mitochondrial sequence off newly imported precursors proteins. Preferentially, cleaves after an arginine at position P2. Required for PINK1 turnover by coupling PINK1 mitochondrial import and cleavage, which results in subsequent PINK1 proteolysis. This is Mitochondrial-processing peptidase subunit beta (PMPCB) from Homo sapiens (Human).